Here is a 526-residue protein sequence, read N- to C-terminus: Cytochrome P450 monooxygenase 226 (526 aa).

The helical transmembrane segment at 15-35 threads the bilayer; it reads FATSYAALTVAAVTLLAALLV. Residues N219, N277, and N320 are each glycosylated (N-linked (GlcNAc...) asparagine). C452 is a binding site for heme.

The protein belongs to the cytochrome P450 family. Requires heme as cofactor.

Its subcellular location is the membrane. It functions in the pathway secondary metabolite biosynthesis. In terms of biological role, cytochrome P450 monooxygenase that is able to use anthracene, carbazole and phenanthrene as substrates for oxidation. These multifunctional properties against a series of polycyclic aromatic hydrocarbons (PAHs) suggest that CYP226 would play important roles, at least in part, in fungal metabolic systems involved in xenobiotic detoxification. In Postia placenta (strain ATCC 44394 / Madison 698-R) (Brown rot fungus), this protein is Cytochrome P450 monooxygenase 226.